A 718-amino-acid chain; its full sequence is DNA ligase (718 aa).

NAD(+) is bound by residues 44-48 (DADYD), 93-94 (SL), and E127. K129 (N6-AMP-lysine intermediate) is an active-site residue. NAD(+) contacts are provided by R150, E186, K302, and K326. Residues C432, C435, C456, and C462 each contribute to the Zn(2+) site. Residues 640 to 718 (TAGSPVAGKT…EDEWLALISG (79 aa)) enclose the BRCT domain.

Belongs to the NAD-dependent DNA ligase family. LigA subfamily. Requires Mg(2+) as cofactor. Mn(2+) serves as cofactor.

The catalysed reaction is NAD(+) + (deoxyribonucleotide)n-3'-hydroxyl + 5'-phospho-(deoxyribonucleotide)m = (deoxyribonucleotide)n+m + AMP + beta-nicotinamide D-nucleotide.. Its function is as follows. DNA ligase that catalyzes the formation of phosphodiester linkages between 5'-phosphoryl and 3'-hydroxyl groups in double-stranded DNA using NAD as a coenzyme and as the energy source for the reaction. It is essential for DNA replication and repair of damaged DNA. The protein is DNA ligase of Rhizobium etli (strain ATCC 51251 / DSM 11541 / JCM 21823 / NBRC 15573 / CFN 42).